Here is a 97-residue protein sequence, read N- to C-terminus: Nucleoid-associated protein HP_0035 (97 aa).

Belongs to the YbaB/EbfC family. In terms of assembly, homodimer.

It is found in the cytoplasm. The protein resides in the nucleoid. Binds to DNA and alters its conformation. May be involved in regulation of gene expression, nucleoid organization and DNA protection. The sequence is that of Nucleoid-associated protein HP_0035 from Helicobacter pylori (strain ATCC 700392 / 26695) (Campylobacter pylori).